A 298-amino-acid polypeptide reads, in one-letter code: uncharacterized protein (298 aa).

This is an uncharacterized protein from Ictalurid herpesvirus 1 (strain Auburn) (IcHV-1).